Here is a 309-residue protein sequence, read N- to C-terminus: 4-hydroxy-3-methylbut-2-enyl diphosphate reductase (309 aa).

Cys12 provides a ligand contact to [4Fe-4S] cluster. (2E)-4-hydroxy-3-methylbut-2-enyl diphosphate contacts are provided by His41 and His74. 2 residues coordinate dimethylallyl diphosphate: His41 and His74. Residues His41 and His74 each coordinate isopentenyl diphosphate. Residue Cys96 participates in [4Fe-4S] cluster binding. (2E)-4-hydroxy-3-methylbut-2-enyl diphosphate is bound at residue His124. His124 is a binding site for dimethylallyl diphosphate. Position 124 (His124) interacts with isopentenyl diphosphate. Glu126 serves as the catalytic Proton donor. Thr167 is a (2E)-4-hydroxy-3-methylbut-2-enyl diphosphate binding site. Residue Cys197 participates in [4Fe-4S] cluster binding. Positions 225, 226, 227, and 269 each coordinate (2E)-4-hydroxy-3-methylbut-2-enyl diphosphate. Dimethylallyl diphosphate contacts are provided by Ser225, Ser226, Asn227, and Ser269. Isopentenyl diphosphate-binding residues include Ser225, Ser226, Asn227, and Ser269.

The protein belongs to the IspH family. The cofactor is [4Fe-4S] cluster.

It catalyses the reaction isopentenyl diphosphate + 2 oxidized [2Fe-2S]-[ferredoxin] + H2O = (2E)-4-hydroxy-3-methylbut-2-enyl diphosphate + 2 reduced [2Fe-2S]-[ferredoxin] + 2 H(+). It carries out the reaction dimethylallyl diphosphate + 2 oxidized [2Fe-2S]-[ferredoxin] + H2O = (2E)-4-hydroxy-3-methylbut-2-enyl diphosphate + 2 reduced [2Fe-2S]-[ferredoxin] + 2 H(+). It participates in isoprenoid biosynthesis; dimethylallyl diphosphate biosynthesis; dimethylallyl diphosphate from (2E)-4-hydroxy-3-methylbutenyl diphosphate: step 1/1. The protein operates within isoprenoid biosynthesis; isopentenyl diphosphate biosynthesis via DXP pathway; isopentenyl diphosphate from 1-deoxy-D-xylulose 5-phosphate: step 6/6. In terms of biological role, catalyzes the conversion of 1-hydroxy-2-methyl-2-(E)-butenyl 4-diphosphate (HMBPP) into a mixture of isopentenyl diphosphate (IPP) and dimethylallyl diphosphate (DMAPP). Acts in the terminal step of the DOXP/MEP pathway for isoprenoid precursor biosynthesis. The sequence is that of 4-hydroxy-3-methylbut-2-enyl diphosphate reductase from Shewanella halifaxensis (strain HAW-EB4).